A 242-amino-acid polypeptide reads, in one-letter code: Thaumatin-like protein 2 (242 aa).

Positions 1–23 are cleaved as a signal peptide; the sequence is MMKTLGAVLSLSLTLLSFGGAHA. Cystine bridges form between Cys32–Cys241, Cys77–Cys87, Cys92–Cys99, Cys147–Cys230, Cys152–Cys213, Cys160–Cys176, Cys180–Cys189, and Cys190–Cys200.

The protein belongs to the thaumatin family. As to expression, preferentially expressed in the abscission zone of fruit. Also expressed in leaf abscission zone.

Its subcellular location is the secreted. Its function is as follows. May be involved in protecting plant tissues from pathogen infection. The protein is Thaumatin-like protein 2 of Prunus persica (Peach).